A 311-amino-acid chain; its full sequence is Olfactory receptor 6C3 (311 aa).

Residues 1 to 22 lie on the Extracellular side of the membrane; it reads MNHTMVTEFVLLGLSDDPDLQI. Asn2 is a glycosylation site (N-linked (GlcNAc...) asparagine). The helical transmembrane segment at 23 to 43 threads the bilayer; sequence VIFLFLFITYILSVTGNLTII. Over 44–51 the chain is Cytoplasmic; that stretch reads TLTFVDSH. Residues 52-72 form a helical membrane-spanning segment; the sequence is LQTPMYFFLRNFSFLEISFTT. Residues 73–96 lie on the Extracellular side of the membrane; sequence VCIPRFLGAIITRNKTISYNNCAA. Cys94 and Cys186 form a disulfide bridge. A helical membrane pass occupies residues 97–117; the sequence is QLFFFIFMGVTEFYILTAMSY. Topologically, residues 118 to 136 are cytoplasmic; the sequence is DRYVAICKPLHYTSIMNRK. The chain crosses the membrane as a helical span at residues 137 to 157; the sequence is LCTLLVLCAWLSGFLTIFPPL. The Extracellular segment spans residues 158-194; that stretch reads MLLLQLDYCASNVIDHFACDYFPLLQLSCSDTWLLEV. The chain crosses the membrane as a helical span at residues 195–214; that stretch reads IGFYFALVTLLFTLALVILS. Over 215 to 234 the chain is Cytoplasmic; that stretch reads YMYIIRTILRIPSASQRKKA. The chain crosses the membrane as a helical span at residues 235–255; that stretch reads FSTCSSHMIVISISYGSCIFM. Over 256 to 268 the chain is Extracellular; that stretch reads YANPSAKEKASLT. The helical transmembrane segment at 269-289 threads the bilayer; sequence KGIAILNTSVAPMLNPFIYTL. The Cytoplasmic segment spans residues 290–311; the sequence is RNQQVKQAFKNVVHKVVFYANQ.

This sequence belongs to the G-protein coupled receptor 1 family.

It localises to the cell membrane. Its function is as follows. Odorant receptor. The chain is Olfactory receptor 6C3 (OR6C3) from Homo sapiens (Human).